Reading from the N-terminus, the 122-residue chain is MSRRSPKLELKLNLSPPTSSQRRMVRSPSRSATTSPTSPPSSCVSSEMNQDEPSVRYSTSPETTSMVLVGCPRCLMYVMLSEDDPKCPKCKSTVLLDFLHENATNANANAAAASSGRKTRRN.

The segment covering 1–10 (MSRRSPKLEL) has biased composition (basic and acidic residues). A disordered region spans residues 1 to 62 (MSRRSPKLEL…PSVRYSTSPE (62 aa)). Positions 7–12 (KLELKL) match the EAR motif. Positions 27–46 (SPSRSATTSPTSPPSSCVSS) are enriched in low complexity. The span at 47-62 (EMNQDEPSVRYSTSPE) shows a compositional bias: polar residues.

As to quaternary structure, interacts with GL2. Interacts with TPL. In terms of tissue distribution, expressed in root and shoot meristems.

Its subcellular location is the nucleus. Acts as a negative regulator of root hair development redundantly with GIR2. GIR1 and GIR2 may function as adapter proteins that associate with GL2 and participate in the control of root hair formation. GIR1 and GIR2 may function as adapter proteins that associate with TPL and participate in the repression of root gene expression. This Arabidopsis thaliana (Mouse-ear cress) protein is Protein GL2-INTERACTING REPRESSOR 1.